Consider the following 219-residue polypeptide: Large ribosomal subunit protein uL16 (219 aa).

The protein belongs to the universal ribosomal protein uL16 family. In terms of assembly, component of the small ribosomal subunit. Mature ribosomes consist of a small (40S) and a large (60S) subunit. The 40S subunit contains about 33 different proteins and 1 molecule of RNA (18S). The 60S subunit contains about 49 different proteins and 3 molecules of RNA (25S, 5.8S and 5S).

The polypeptide is Large ribosomal subunit protein uL16 (RPL10) (Encephalitozoon cuniculi (strain GB-M1) (Microsporidian parasite)).